The sequence spans 97 residues: YcgL domain-containing protein Avin_32960 (97 aa).

Positions 3-87 (CICSIYKSPR…PEEEYVEHLP (85 aa)) constitute a YcgL domain.

In Azotobacter vinelandii (strain DJ / ATCC BAA-1303), this protein is YcgL domain-containing protein Avin_32960.